We begin with the raw amino-acid sequence, 93 residues long: uncharacterized protein (93 aa).

3 helical membrane-spanning segments follow: residues 15–35, 48–68, and 72–92; these read MAGL…VMLV, ILAI…IYQI, and LSYA…AGVH.

The protein localises to the cell membrane. This is an uncharacterized protein from Bacillus subtilis (strain 168).